The following is a 570-amino-acid chain: Putative diflavin flavoprotein A 5 (570 aa).

A zinc metallo-hydrolase region spans residues Glu38–His231. Residues Val260–Lys402 form the Flavodoxin-like domain. The interval Val421–Tyr570 is flavodoxin-reductase-like.

In the N-terminal section; belongs to the zinc metallo-hydrolase group 3 family. It in the C-terminal section; belongs to the flavodoxin reductase family. The cofactor is Fe cation.

In terms of biological role, mediates electron transfer from NADH to oxygen, reducing it to water. This modular protein has 3 redox cofactors, in other organisms the same activity requires 2 or 3 proteins. The chain is Putative diflavin flavoprotein A 5 (dfa5) from Nostoc sp. (strain PCC 7120 / SAG 25.82 / UTEX 2576).